The primary structure comprises 480 residues: tRNA-2-methylthio-N(6)-dimethylallyladenosine synthase (480 aa).

The MTTase N-terminal domain maps to 32–149 (RKLYIRTFGC…LPELIRRRRA (118 aa)). The [4Fe-4S] cluster site is built by cysteine 41, cysteine 78, cysteine 112, cysteine 186, cysteine 190, and cysteine 193. Positions 172–405 (RIEGATAFVS…QALINAQAAA (234 aa)) constitute a Radical SAM core domain. Positions 408-471 (QAMVGTRQRL…PNSLRARVAD (64 aa)) constitute a TRAM domain.

This sequence belongs to the methylthiotransferase family. MiaB subfamily. In terms of assembly, monomer. It depends on [4Fe-4S] cluster as a cofactor.

The protein localises to the cytoplasm. The catalysed reaction is N(6)-dimethylallyladenosine(37) in tRNA + (sulfur carrier)-SH + AH2 + 2 S-adenosyl-L-methionine = 2-methylsulfanyl-N(6)-dimethylallyladenosine(37) in tRNA + (sulfur carrier)-H + 5'-deoxyadenosine + L-methionine + A + S-adenosyl-L-homocysteine + 2 H(+). Functionally, catalyzes the methylthiolation of N6-(dimethylallyl)adenosine (i(6)A), leading to the formation of 2-methylthio-N6-(dimethylallyl)adenosine (ms(2)i(6)A) at position 37 in tRNAs that read codons beginning with uridine. In Bordetella petrii (strain ATCC BAA-461 / DSM 12804 / CCUG 43448), this protein is tRNA-2-methylthio-N(6)-dimethylallyladenosine synthase.